The following is a 409-amino-acid chain: Beta-glucanase (409 aa).

Residues 1–31 form the signal peptide; that stretch reads MRKNRGFSFSSKAVMMCCLAFLLIPASFAFA. The active-site Proton donor is the Glu-95. The Nucleophile role is filled by Asp-156.

This sequence belongs to the glycosyl hydrolase 8 (cellulase D) family.

The enzyme catalyses Hydrolysis of (1-&gt;4)-beta-D-glucosidic linkages in beta-D-glucans containing (1-&gt;3)- and (1-&gt;4)-bonds.. This Niallia circulans (Bacillus circulans) protein is Beta-glucanase (bgc).